Reading from the N-terminus, the 269-residue chain is MVKAGELVEQQKAAMEEEANAEAAEDQEEPEDTACSSSSKKKKKVVPGIVYLGHVPPRFRPLHVRNLLSAYGEVGRVFFQAEDHFVKRKKKAAAAAGGKKGAKYSKDYTEGWVEFRDKRVAKRVAASLHNTPMGARKRSPFRYDLWNLKYLHRFTWSHLSEHLAFERQVRRQRLRAEVAQAKRETDFYLRNVEQGQHFLAADGDATRPNSSWTFTQRPTEQEFRARKAARPGGRERARLANVEDQARSNRGLLAKIFGAPLPAESKEKP.

The tract at residues Met1 to Lys40 is disordered. Positions Gly5–Glu29 form a coiled coil. Residues Glu16–Asp32 show a composition bias toward acidic residues. Positions Gly48 to Leu145 constitute an RRM domain. Residues Ala164–Gln194 are a coiled coil. The interval Glu220–Asp244 is disordered.

This sequence belongs to the ESF2/ABP1 family. As to quaternary structure, interacts with ESF1/ABTAP. Interacts with IGHMBP2. Ubiquitously expressed.

It localises to the nucleus. Its subcellular location is the nucleolus. In terms of biological role, could be a novel TATA-binding protein (TBP) which can function as a basal transcription activator. Can act as a regulator of basal transcription for class II genes. This is Activator of basal transcription 1 (Abt1) from Mus musculus (Mouse).